Consider the following 297-residue polypeptide: Mitochondrial glycine transporter (297 aa).

Solcar repeat units lie at residues 5–81 (TGHL…MRTA), 105–189 (LSMY…LKHT), and 211–295 (TSTA…LIKH). 6 consecutive transmembrane segments (helical) span residues 8-33 (LIGGFAGGLSSAVALQPLDLLKTRFQ), 56-82 (GTLPSAIRTSVGSALYLSSLNLMRTAL), 111-136 (LVTGAFARGTVGYITMPITIIKVRYE), 164-187 (GFGPTCLRDAPYSGLYVLLYEKLK), 215-241 (INSTSAILSASMATTVTAPFDTIKTRM), and 270-288 (GLSMRLTRKALSAGIAWGI).

This sequence belongs to the mitochondrial carrier (TC 2.A.29) family. SLC25A38 subfamily.

The protein localises to the mitochondrion inner membrane. The catalysed reaction is glycine(in) = glycine(out). Its function is as follows. Mitochondrial glycine transporter that imports glycine into the mitochondrial matrix. Plays an important role in providing glycine for the first enzymatic step in heme biosynthesis, the condensation of glycine with succinyl-CoA to produce 5-aminolevulinate (ALA) in the mitochondrial matrix. The sequence is that of Mitochondrial glycine transporter from Candida glabrata (strain ATCC 2001 / BCRC 20586 / JCM 3761 / NBRC 0622 / NRRL Y-65 / CBS 138) (Yeast).